Consider the following 250-residue polypeptide: Dimethyl sulfide dehydrogenase assembly chaperone protein (250 aa).

Residues Ser231–Gly250 form a disordered region.

The protein belongs to the type II DMSO reductase enzyme chaperone family.

Its subcellular location is the cytoplasm. Functionally, may function as a system-specific chaperone protein essential for the assembly of an active dimethyl sulfide dehydrogenase DdhABC. This Rhodovulum sulfidophilum (Rhodobacter sulfidophilus) protein is Dimethyl sulfide dehydrogenase assembly chaperone protein (ddhD).